Consider the following 352-residue polypeptide: Spermidine/putrescine import ATP-binding protein PotA (352 aa).

Residues 7 to 237 (IELKNVSKKY…PKNKFVANFI (231 aa)) form the ABC transporter domain. Residue 39-46 (GPSGCGKT) coordinates ATP.

Belongs to the ABC transporter superfamily. Spermidine/putrescine importer (TC 3.A.1.11.1) family. In terms of assembly, the complex is composed of two ATP-binding proteins (PotA), two transmembrane proteins (PotB and PotC) and a solute-binding protein (PotD).

It localises to the cell membrane. It carries out the reaction ATP + H2O + polyamine-[polyamine-binding protein]Side 1 = ADP + phosphate + polyamineSide 2 + [polyamine-binding protein]Side 1.. Its function is as follows. Part of the ABC transporter complex PotABCD involved in spermidine/putrescine import. Responsible for energy coupling to the transport system. The polypeptide is Spermidine/putrescine import ATP-binding protein PotA (Clostridium acetobutylicum (strain ATCC 824 / DSM 792 / JCM 1419 / IAM 19013 / LMG 5710 / NBRC 13948 / NRRL B-527 / VKM B-1787 / 2291 / W)).